Consider the following 465-residue polypeptide: Protein hedgehog (465 aa).

The N-palmitoyl cysteine moiety is linked to residue Cys-79. 7 residues coordinate Ca(2+): Glu-143, Glu-144, Asp-149, Thr-179, Glu-180, Asp-183, and Asp-185. Gly-251 carries Cholesterol glycine ester lipidation.

This sequence belongs to the hedgehog family. Interacts with shf. The C-terminal part of the hedgehog protein precursor displays an autoproteolysis activity that results in the cleavage of the full-length protein into two parts (N-product and C-product). In addition, the C-terminal part displays a cholesterol transferase activity that results by the covalent attachment of a cholesterol moiety to the C-terminal of the newly generated N-product. The N-product is the active species in both local and long-range signaling, whereas the C-product has no signaling activity. Post-translationally, cholesterylation is required for N-product targeting to lipid rafts and multimerization. In terms of processing, N-palmitoylation by Rasp of the hedgehog N-product, within the secretory pathway, is required for the embryonic and larval patterning activities of the hedgehog signal.

It is found in the nucleus. The protein localises to the cytoplasm. It localises to the cell membrane. The catalysed reaction is glycyl-L-cysteinyl-[protein] + cholesterol + H(+) = [protein]-C-terminal glycyl cholesterol ester + N-terminal L-cysteinyl-[protein]. In terms of biological role, the C-terminal part of the hedgehog protein precursor displays an autoproteolysis activity that results in the cleavage of the full-length protein into two parts (N-product and C-product). In addition, the C-terminal part displays a cholesterol transferase activity that results by the covalent attachment of a cholesterol moiety to the C-terminal of the newly generated N-product. Once cleaved, the C-product has no signaling activity and diffuses from the cell. Functionally, the dually lipidated hedgehog protein N-product is a morphogen which is essential for a variety of patterning events during development. Establishes the anterior-posterior axis of the embryonic segments and patterns the larval imaginal disks. Binds to the patched (ptc) receptor, which functions in association with smoothened (smo), to activate the transcription of target genes wingless (wg), decapentaplegic (dpp) and ptc. In the absence of hh, ptc represses the constitutive signaling activity of smo through fused (fu). Essential component of a signaling pathway which regulates the Duox-dependent gut immune response to bacterial uracil; required to activate Cad99C-dependent endosome formation, norpA-dependent Ca2+ mobilization and p38 MAPK, which are essential steps in the Duox-dependent production of reactive oxygen species (ROS) in response to intestinal bacterial infection. During photoreceptor differentiation, it up-regulates transcription of Ubr3, which in turn promotes the hh-signaling pathway by mediating the ubiquitination and degradation of cos. The polypeptide is Protein hedgehog (Drosophila yakuba (Fruit fly)).